A 428-amino-acid chain; its full sequence is Putative zinc finger protein 355P (428 aa).

One can recognise a KRAB domain in the interval 1–64; the sequence is MRDEVAEKEK…KHPGLTQHNI (64 aa). 3 C2H2-type zinc fingers span residues 72–94, 100–122, and 128–150; these read YKCKDCGKIFKWSSNLTIHQRIH, YKCEECGKAFKQSSKLNEHMRAH, and YKCEECGKAFKHPSGLTLHKRIH. The C2H2-type 4; degenerate zinc finger occupies 156-178; the sequence is YKFEECDKAFYWVLSFTKHMIIH. The C2H2-type 5; degenerate zinc-finger motif lies at 184-206; that stretch reads YKYQECGKAFKWSSNLTIHKRIH. The C2H2-type 6; degenerate zinc finger occupies 212–234; sequence CKCEECGKACKQSLGLTIQKRIH. The C2H2-type 7; degenerate zinc finger occupies 263-285; sequence YNCEKCGKAFYCSSNLIQNNIVH. 2 C2H2-type zinc fingers span residues 291-313 and 335-357; these read YKCQECGKAFKKSLDLNVHKIIH and YKCEECGKGFYCSSSLTKHMIVH. Residues 363–385 form a C2H2-type 10; degenerate zinc finger; it reads YKCEECGKAFKWSSELTIHQRIR. Residues 391-413 form a C2H2-type 11 zinc finger; sequence YKCEECVRVFKHSSKLNEHKRNH.

Belongs to the krueppel C2H2-type zinc-finger protein family.

The protein localises to the nucleus. Its function is as follows. May be involved in transcriptional regulation. The polypeptide is Putative zinc finger protein 355P (ZNF355P) (Homo sapiens (Human)).